A 470-amino-acid polypeptide reads, in one-letter code: Glutamate--tRNA ligase (470 aa).

A 'HIGH' region motif is present at residues 12–22 (PSPTGIFHVGG). Zn(2+) contacts are provided by Cys103, Cys105, Cys125, and Asp127. The 'KMSKS' region motif lies at 236-240 (KLSKR). Lys239 serves as a coordination point for ATP.

The protein belongs to the class-I aminoacyl-tRNA synthetase family. Glutamate--tRNA ligase type 1 subfamily. As to quaternary structure, monomer. Requires Zn(2+) as cofactor.

It localises to the cytoplasm. The catalysed reaction is tRNA(Glu) + L-glutamate + ATP = L-glutamyl-tRNA(Glu) + AMP + diphosphate. Its function is as follows. Catalyzes the attachment of glutamate to tRNA(Glu) in a two-step reaction: glutamate is first activated by ATP to form Glu-AMP and then transferred to the acceptor end of tRNA(Glu). The protein is Glutamate--tRNA ligase of Frankia alni (strain DSM 45986 / CECT 9034 / ACN14a).